The primary structure comprises 84 residues: MKTLLLTLVVVTIVCLDLGYTRKCLNTPLPLIYKTCPIGQDKCIKMTIKKLPSKYDVIRGCIDICPKSSADVEVLCCDTNKCNK.

Positions 1-21 (MKTLLLTLVVVTIVCLDLGYT) are cleaved as a signal peptide. Intrachain disulfides connect Cys24-Cys43, Cys36-Cys61, Cys65-Cys76, and Cys77-Cys82.

Belongs to the three-finger toxin family. Short-chain subfamily. Aminergic toxin sub-subfamily. As to expression, expressed by the venom gland.

Its subcellular location is the secreted. Its function is as follows. Acts as a beta-blocker by binding to beta-1 and beta-2 adrenergic receptors (ADRB1 and ADRB2). It dose-dependently decreases the heart rate (bradycardia), whereas conventional cardiotoxins increases it. At 100 mg/kg, intraperitoneal injection into mice provokes labored breathing, impaired locomotion, lack of response to external stimuli, and death (after 30 minutes). This Ophiophagus hannah (King cobra) protein is Beta-cardiotoxin CTX15.